The chain runs to 156 residues: Ribonuclease H (156 aa).

The RNase H type-1 domain occupies 7–148; sequence QDKIVMIATD…ADQLASDAAI (142 aa). Residues Asp16, Glu54, Asp76, and Asp140 each contribute to the Mg(2+) site.

It belongs to the RNase H family. In terms of assembly, monomer. Mg(2+) serves as cofactor.

The protein localises to the cytoplasm. The enzyme catalyses Endonucleolytic cleavage to 5'-phosphomonoester.. Endonuclease that specifically degrades the RNA of RNA-DNA hybrids. The polypeptide is Ribonuclease H (rnhA) (Zymomonas mobilis subsp. mobilis (strain ATCC 31821 / ZM4 / CP4)).